Here is a 775-residue protein sequence, read N- to C-terminus: Subtilisin-like protease SBT1.5 (775 aa).

An N-terminal signal peptide occupies residues 1–19 (MAFFFYFFFLLTLSSPSSS). Positions 20-103 (ASSSNSLTYI…VIPEQVRHLH (84 aa)) are cleaved as a propeptide — activation peptide. Residues 27–103 (TYIVHVDHEA…VIPEQVRHLH (77 aa)) enclose the Inhibitor I9 domain. A Peptidase S8 domain is found at 107–617 (SPEFLGLRST…SGHVHPTKAM (511 aa)). Residue D137 is the Charge relay system of the active site. N-linked (GlcNAc...) asparagine glycosylation occurs at N196. Catalysis depends on H210, which acts as the Charge relay system. The PA domain maps to 367–459 (MYPLVYGGSL…VGASGGDEIR (93 aa)). The active-site Charge relay system is S549. N-linked (GlcNAc...) asparagine glycans are attached at residues N599, N638, and N762.

It belongs to the peptidase S8 family.

The protein localises to the secreted. In Arabidopsis thaliana (Mouse-ear cress), this protein is Subtilisin-like protease SBT1.5.